We begin with the raw amino-acid sequence, 299 residues long: Methionyl-tRNA formyltransferase (299 aa).

A (6S)-5,6,7,8-tetrahydrofolate-binding site is contributed by 109-112 (SLLP).

The protein belongs to the Fmt family.

It carries out the reaction L-methionyl-tRNA(fMet) + (6R)-10-formyltetrahydrofolate = N-formyl-L-methionyl-tRNA(fMet) + (6S)-5,6,7,8-tetrahydrofolate + H(+). Attaches a formyl group to the free amino group of methionyl-tRNA(fMet). The formyl group appears to play a dual role in the initiator identity of N-formylmethionyl-tRNA by promoting its recognition by IF2 and preventing the misappropriation of this tRNA by the elongation apparatus. This is Methionyl-tRNA formyltransferase from Wolbachia sp. subsp. Drosophila simulans (strain wRi).